Reading from the N-terminus, the 282-residue chain is Bis(5'-nucleosyl)-tetraphosphatase, symmetrical (282 aa).

The protein belongs to the Ap4A hydrolase family.

The enzyme catalyses P(1),P(4)-bis(5'-adenosyl) tetraphosphate + H2O = 2 ADP + 2 H(+). In terms of biological role, hydrolyzes diadenosine 5',5'''-P1,P4-tetraphosphate to yield ADP. The polypeptide is Bis(5'-nucleosyl)-tetraphosphatase, symmetrical (Escherichia fergusonii (strain ATCC 35469 / DSM 13698 / CCUG 18766 / IAM 14443 / JCM 21226 / LMG 7866 / NBRC 102419 / NCTC 12128 / CDC 0568-73)).